The chain runs to 447 residues: C4-dicarboxylate transport protein (447 aa).

The next 8 membrane-spanning stretches (helical) occupy residues isoleucine 19–proline 39, leucine 55–leucine 75, isoleucine 90–valine 110, alanine 155–leucine 175, leucine 199–isoleucine 219, methionine 232–valine 252, leucine 343–isoleucine 363, and alanine 366–valine 386.

Belongs to the dicarboxylate/amino acid:cation symporter (DAACS) (TC 2.A.23) family.

It localises to the cell inner membrane. Functionally, responsible for the transport of dicarboxylates such as succinate, fumarate, and malate from the periplasm across the membrane. The polypeptide is C4-dicarboxylate transport protein (Rhodospirillum rubrum (strain ATCC 11170 / ATH 1.1.1 / DSM 467 / LMG 4362 / NCIMB 8255 / S1)).